A 946-amino-acid chain; its full sequence is Glucoamylase 1 (946 aa).

The N-terminal stretch at Met-1–Ala-20 is a signal peptide. Asn-51, Asn-68, Asn-97, Asn-187, Asn-244, Asn-373, Asn-393, Asn-406, and Asn-437 each carry an N-linked (GlcNAc...) asparagine glycan. Catalysis depends on residues Asp-462 and Glu-465. A glycan (N-linked (GlcNAc...) asparagine) is linked at Asn-505. A compositionally biased stretch (low complexity) spans Ala-517 to Ser-532. Positions Ala-517 to Pro-541 are disordered. Asn-570 carries an N-linked (GlcNAc...) asparagine glycan. Asp-628 (proton donor) is an active-site residue. N-linked (GlcNAc...) asparagine glycans are attached at residues Asn-704, Asn-772, Asn-801, Asn-895, and Asn-912.

Belongs to the glycosyl hydrolase 31 family. Post-translationally, the N-terminus is blocked.

Its subcellular location is the secreted. It is found in the cell wall. It localises to the membrane. It catalyses the reaction Hydrolysis of terminal (1-&gt;4)-linked alpha-D-glucose residues successively from non-reducing ends of the chains with release of beta-D-glucose.. This chain is Glucoamylase 1 (GAM1), found in Candida albicans (strain SC5314 / ATCC MYA-2876) (Yeast).